Consider the following 356-residue polypeptide: UDP-N-acetylglucosamine--N-acetylmuramyl-(pentapeptide) pyrophosphoryl-undecaprenol N-acetylglucosamine transferase (356 aa).

Residues 12-14 (TGG), asparagine 124, arginine 163, serine 188, isoleucine 242, and glutamine 287 contribute to the UDP-N-acetyl-alpha-D-glucosamine site.

It belongs to the glycosyltransferase 28 family. MurG subfamily.

Its subcellular location is the cell inner membrane. It catalyses the reaction di-trans,octa-cis-undecaprenyl diphospho-N-acetyl-alpha-D-muramoyl-L-alanyl-D-glutamyl-meso-2,6-diaminopimeloyl-D-alanyl-D-alanine + UDP-N-acetyl-alpha-D-glucosamine = di-trans,octa-cis-undecaprenyl diphospho-[N-acetyl-alpha-D-glucosaminyl-(1-&gt;4)]-N-acetyl-alpha-D-muramoyl-L-alanyl-D-glutamyl-meso-2,6-diaminopimeloyl-D-alanyl-D-alanine + UDP + H(+). Its pathway is cell wall biogenesis; peptidoglycan biosynthesis. Its function is as follows. Cell wall formation. Catalyzes the transfer of a GlcNAc subunit on undecaprenyl-pyrophosphoryl-MurNAc-pentapeptide (lipid intermediate I) to form undecaprenyl-pyrophosphoryl-MurNAc-(pentapeptide)GlcNAc (lipid intermediate II). This chain is UDP-N-acetylglucosamine--N-acetylmuramyl-(pentapeptide) pyrophosphoryl-undecaprenol N-acetylglucosamine transferase, found in Pseudomonas syringae pv. syringae (strain B728a).